The primary structure comprises 462 residues: Elongation factor 1-alpha 1 (462 aa).

The residue at position 2 (G2) is a N,N,N-trimethylglycine. The tr-type G domain occupies 5 to 242 (KTHINIVVIG…DCILPPTRPT (238 aa)). A G1 region spans residues 14 to 21 (GHVDSGKS). 14–21 (GHVDSGKS) provides a ligand contact to GTP. K36 bears the N6,N6,N6-trimethyllysine; alternate mark. K36 bears the N6,N6-dimethyllysine; alternate mark. The residue at position 36 (K36) is an N6-methyllysine; alternate. Residue K55 is modified to N6,N6-dimethyllysine. The G2 stretch occupies residues 70 to 74 (GITID). At K79 the chain carries N6,N6,N6-trimethyllysine; by EEF1AKMT1. Residues 91–94 (DAPG) are G3. Position 153 to 156 (153 to 156 (NKMD)) interacts with GTP. Residues 153 to 156 (NKMD) are G4. Residue K165 is modified to N6,N6,N6-trimethyllysine; alternate; by EEF1AKMT3. N6,N6-dimethyllysine; alternate; by EEF1AKMT3 is present on K165. N6-acetyllysine; alternate is present on K165. K165 carries the N6-methyllysine; alternate; by EEF1AKMT3 modification. N6-acetyllysine is present on K172. GTP is bound at residue 194 to 196 (SGW). Positions 194–196 (SGW) are G5. K273 is modified (N6-acetyllysine). At S300 the chain carries Phosphoserine; by TGFBR1. At E301 the chain carries 5-glutamyl glycerylphosphorylethanolamine. The residue at position 318 (K318) is an N6,N6,N6-trimethyllysine; by EEF1AKMT2. The residue at position 374 (E374) is a 5-glutamyl glycerylphosphorylethanolamine. K385 is covalently cross-linked (Glycyl lysine isopeptide (Lys-Gly) (interchain with G-Cter in ubiquitin)). Position 392 is an N6-acetyllysine; alternate (K392). The residue at position 392 (K392) is an N6-succinyllysine; alternate. The residue at position 432 (T432) is a Phosphothreonine; by PASK. An N6-acetyllysine modification is found at K439.

The protein belongs to the TRAFAC class translation factor GTPase superfamily. Classic translation factor GTPase family. EF-Tu/EF-1A subfamily. As to quaternary structure, found in a nuclear export complex with XPO5, EEF1A1, Ran and aminoacylated tRNA. Interacts with PARP1 and TXK. Interacts with KARS1. May interact with ERGIC2. Interacts with IFIT1 (via TPR repeats 4-7). Interacts with DLC1, facilitating distribution to the membrane periphery and ruffles upon growth factor stimulation. Interacts with ZPR1; the interaction occurs in a epidermal growth factor (EGF)-dependent manner. Interacts with PPP1R16B. Interacts with SPHK1 and SPHK2; both interactions increase SPHK1 and SPHK2 kinase activity. Interacts with guanyl-nucleotide exchange factor EEF1B2. Interacts (via middle-region) with HTATIP2 (via N-terminus); the interaction is direct and competes with EEF1A1 binding to guanyl-nucleotide exchange factor EEF1B2, thereby inhibiting GDP for GTP exchange and reactivation of EEF1A1. Interacts with tRNA. In terms of processing, ISGylated. Post-translationally, phosphorylated by TXK. Phosphorylation by PASK increases translation efficiency. Phosphorylated by ROCK2. Phosphorylation by TGFBR1 inhibits translation elongation. Trimethylated at Lys-79 by EEF1AKMT1. Methylated at Lys-165 by EEF1AKMT3, methylation by EEF1AKMT3 is dynamic as well as inducible by stress conditions, such as ER-stress, and plays a regulatory role on mRNA translation. Trimethylated at Lys-318 by EEF1AKMT2. Mono-, di-, and trimethylated at Lys-36 by EEF1AKMT4; trimethylated form is predominant. Methylation by EEF1AKMT4 contributes to the fine-tuning of translation rates for a subset of tRNAs. Trimethylated at Gly-2 by METTL13. Mono- and dimethylated at Lys-55 by METTL13; dimethylated form is predominant. In terms of processing, ubiquitinated at Lys-385 by RNF14 in response to ribosome collisions (ribosome stalling), leading to its degradation by the proteasome and rescue of stalled ribosomes.

It is found in the cytoplasm. It localises to the nucleus. The protein resides in the nucleolus. Its subcellular location is the cell membrane. The catalysed reaction is GTP + H2O = GDP + phosphate + H(+). Functionally, translation elongation factor that catalyzes the GTP-dependent binding of aminoacyl-tRNA (aa-tRNA) to the A-site of ribosomes during the elongation phase of protein synthesis. Base pairing between the mRNA codon and the aa-tRNA anticodon promotes GTP hydrolysis, releasing the aa-tRNA from EEF1A1 and allowing its accommodation into the ribosome. The growing protein chain is subsequently transferred from the P-site peptidyl tRNA to the A-site aa-tRNA, extending it by one amino acid through ribosome-catalyzed peptide bond formation. Also plays a role in the positive regulation of IFNG transcription in T-helper 1 cells as part of an IFNG promoter-binding complex with TXK and PARP1. Also plays a role in cytoskeleton organization by promoting actin bundling. The sequence is that of Elongation factor 1-alpha 1 (EEF1A1) from Cricetulus griseus (Chinese hamster).